A 688-amino-acid polypeptide reads, in one-letter code: Elongation factor G (688 aa).

Residues 8 to 282 enclose the tr-type G domain; sequence KNFRNFGIMA…AVVDFLPSPV (275 aa). GTP is bound by residues 17-24, 81-85, and 135-138; these read AHIDAGKT, DTPGH, and NKMD.

It belongs to the TRAFAC class translation factor GTPase superfamily. Classic translation factor GTPase family. EF-G/EF-2 subfamily.

Its subcellular location is the cytoplasm. Its function is as follows. Catalyzes the GTP-dependent ribosomal translocation step during translation elongation. During this step, the ribosome changes from the pre-translocational (PRE) to the post-translocational (POST) state as the newly formed A-site-bound peptidyl-tRNA and P-site-bound deacylated tRNA move to the P and E sites, respectively. Catalyzes the coordinated movement of the two tRNA molecules, the mRNA and conformational changes in the ribosome. In Mycoplasma genitalium (strain ATCC 33530 / DSM 19775 / NCTC 10195 / G37) (Mycoplasmoides genitalium), this protein is Elongation factor G (fusA).